Here is a 343-residue protein sequence, read N- to C-terminus: Thiamine thiazole synthase 4, chloroplastic (343 aa).

Substrate contacts are provided by residues Ala89, 109–110 (EQ), Gly117, and Ala182. A 2,3-didehydroalanine (Cys) modification is found at Cys211. Residues Asp213, His228, Met280, and 290-292 (RMG) contribute to the substrate site.

The protein belongs to the THI4 family. In terms of assembly, homooctamer. Fe cation serves as cofactor. Post-translationally, during the catalytic reaction, a sulfide is transferred from Cys-211 to a reaction intermediate, generating a dehydroalanine residue.

It is found in the plastid. It localises to the chloroplast. The catalysed reaction is [ADP-thiazole synthase]-L-cysteine + glycine + NAD(+) = [ADP-thiazole synthase]-dehydroalanine + ADP-5-ethyl-4-methylthiazole-2-carboxylate + nicotinamide + 3 H2O + 2 H(+). Involved in biosynthesis of the thiamine precursor thiazole. Catalyzes the conversion of NAD and glycine to adenosine diphosphate 5-(2-hydroxyethyl)-4-methylthiazole-2-carboxylic acid (ADT), an adenylated thiazole intermediate. The reaction includes an iron-dependent sulfide transfer from a conserved cysteine residue of the protein to a thiazole intermediate. The enzyme can only undergo a single turnover, which suggests it is a suicide enzyme. May have additional roles in adaptation to various stress conditions and in DNA damage tolerance. This chain is Thiamine thiazole synthase 4, chloroplastic, found in Physcomitrium patens (Spreading-leaved earth moss).